The sequence spans 645 residues: Threonine--tRNA ligase (645 aa).

Residues 1-61 enclose the TGS domain; it reads MPVITLPDGS…SDDAKLSIIT (61 aa). Positions 243 to 534 are catalytic; that stretch reads DHRKLGKKLD…LIEDTEGAFP (292 aa). Residues Cys-334, His-385, and His-511 each contribute to the Zn(2+) site.

Belongs to the class-II aminoacyl-tRNA synthetase family. In terms of assembly, homodimer. The cofactor is Zn(2+).

Its subcellular location is the cytoplasm. It catalyses the reaction tRNA(Thr) + L-threonine + ATP = L-threonyl-tRNA(Thr) + AMP + diphosphate + H(+). In terms of biological role, catalyzes the attachment of threonine to tRNA(Thr) in a two-step reaction: L-threonine is first activated by ATP to form Thr-AMP and then transferred to the acceptor end of tRNA(Thr). Also edits incorrectly charged L-seryl-tRNA(Thr). The protein is Threonine--tRNA ligase of Marinomonas sp. (strain MWYL1).